The following is a 337-amino-acid chain: Replication-associated protein (337 aa).

Residues 12-114 (RLQTKYVFLT…DGNVITKGEF (103 aa)) form the CRESS-DNA virus Rep endonuclease domain. An RCR-1 motif is present at residues 19-22 (FLTY). A divalent metal cation contacts are provided by Glu-53, His-61, and His-63. An RCR-2 motif is present at residues 61-63 (HLH). Tyr-101 serves as the catalytic For DNA cleavage activity. The RCR-3 signature appears at 101 to 104 (YISK). Position 105 (Asp-105) interacts with a divalent metal cation. An oligomerization region spans residues 163 to 175 (SANKLFPPQPEIY). 216-223 (GPSRTGKT) is a binding site for ATP. The tract at residues 239 to 257 (IDFTVYDDHATYNVIDDIP) is transactivation. The Nuclear localization signal signature appears at 279-289 (KYGKKKKIKGG).

The protein belongs to the geminiviridae Rep protein family. In terms of assembly, homooligomer. Rep binds to repeated DNA motifs (iterons). Forms the O-complex, which is a Rep-DNA complex involved in the initiation of RCR. Part of the C- and V-complexes which are RepA-Rep-DNA complexes involved in the c-sense and v-sense transcription. The cofactor is Mg(2+). Mn(2+) is required as a cofactor.

The protein localises to the host nucleus. In terms of biological role, essential for the replication of viral ssDNA. The closed circular ssDNA genome is first converted to a superhelical dsDNA. Rep binds a specific region at the genome origin of replication. It introduces an endonucleolytic nick within the conserved sequence 5'-TAATATTAC-3' in the intergenic region of the genome present in all geminiviruses, thereby initiating the rolling circle replication (RCR). Following cleavage, binds covalently to the 5'-phosphate of DNA as a tyrosyl ester. The cleavage gives rise to a free 3'-OH that serves as a primer for the cellular DNA polymerase. The polymerase synthesizes the (+) strand DNA by rolling circle mechanism. After one round of replication, a Rep-catalyzed nucleotidyl transfer reaction releases a circular single-stranded virus genome, thereby terminating the replication. Displays origin-specific DNA cleavage, nucleotidyl transferase, ATPase and helicase activities. Acts as an inhibitor of C-sense gene transcription. The chain is Replication-associated protein from Tobacco yellow dwarf virus (strain Australia) (TYDV).